Reading from the N-terminus, the 271-residue chain is Oligodendrocyte transcription factor 1 (271 aa).

The disordered stretch occupies residues 38-117 (YRQPPSSSSS…RKINSRERKR (80 aa)). The segment covering 43–61 (SSSSSSTSSTSSTSSSSTT) has biased composition (low complexity). The bHLH domain occupies 105-164 (QLRRKINSRERKRMQDLNLAMDALREVILPYSAAHCQGAPGRKLSKIATLLLARNYILLL).

In terms of tissue distribution, expressed in the brain, in oligodendrocytes. Strongly expressed in oligodendrogliomas, while expression is weak to moderate in astrocytomas. Expression in glioblastomas is highly variable.

It is found in the nucleus. Functionally, promotes formation and maturation of oligodendrocytes, especially within the brain. Cooperates with OLIG2 to establish the pMN domain of the embryonic neural tube. In Homo sapiens (Human), this protein is Oligodendrocyte transcription factor 1 (OLIG1).